We begin with the raw amino-acid sequence, 142 residues long: Transcriptional regulator MraZ (142 aa).

SpoVT-AbrB domains lie at 5 to 47 and 76 to 119; these read RFTH…PMDS and ATVV…SPEN.

It belongs to the MraZ family. As to quaternary structure, forms oligomers.

The protein resides in the cytoplasm. The protein localises to the nucleoid. The protein is Transcriptional regulator MraZ of Thermomicrobium roseum (strain ATCC 27502 / DSM 5159 / P-2).